The primary structure comprises 159 residues: Ribosomal RNA large subunit methyltransferase H (159 aa).

Residues L76, G108, and 127–132 (FSKMTL) contribute to the S-adenosyl-L-methionine site.

The protein belongs to the RNA methyltransferase RlmH family. In terms of assembly, homodimer.

It is found in the cytoplasm. It catalyses the reaction pseudouridine(1915) in 23S rRNA + S-adenosyl-L-methionine = N(3)-methylpseudouridine(1915) in 23S rRNA + S-adenosyl-L-homocysteine + H(+). In terms of biological role, specifically methylates the pseudouridine at position 1915 (m3Psi1915) in 23S rRNA. The polypeptide is Ribosomal RNA large subunit methyltransferase H (Bacillus thuringiensis subsp. konkukian (strain 97-27)).